Consider the following 284-residue polypeptide: ATP phosphoribosyltransferase (284 aa).

It belongs to the ATP phosphoribosyltransferase family. Long subfamily. It depends on Mg(2+) as a cofactor.

It is found in the cytoplasm. The enzyme catalyses 1-(5-phospho-beta-D-ribosyl)-ATP + diphosphate = 5-phospho-alpha-D-ribose 1-diphosphate + ATP. It functions in the pathway amino-acid biosynthesis; L-histidine biosynthesis; L-histidine from 5-phospho-alpha-D-ribose 1-diphosphate: step 1/9. Feedback inhibited by histidine. In terms of biological role, catalyzes the condensation of ATP and 5-phosphoribose 1-diphosphate to form N'-(5'-phosphoribosyl)-ATP (PR-ATP). Has a crucial role in the pathway because the rate of histidine biosynthesis seems to be controlled primarily by regulation of HisG enzymatic activity. This chain is ATP phosphoribosyltransferase, found in Corynebacterium kroppenstedtii (strain DSM 44385 / JCM 11950 / CIP 105744 / CCUG 35717).